The sequence spans 298 residues: MQTQRLRIAIQKKGRLSKESQALLKKCGVKFNVMGERLVVHSENMPIDLLLVRDDDIPGLIMDGVVDLGFIGENELEEVRLDRKALGEPYEFVQLRRLDFGGCRLSIAIDKDEEYNGPQDLAGKRIATTYPQLLKAYMDEVGVPFSTCMLTGSVEVAPRAGLADAIADLVSTGATLEANGLKEAEIIFKSKATLIQRTGEFDADKVALIEKLLTRMQGVQQAKESKYIMLHAPAEKLDQIKALLPGAEDPTVLPLSADKQKVAVHLVSTENLFWETMEQLKELGASSILVLPIEKMME.

Belongs to the ATP phosphoribosyltransferase family. Long subfamily. It depends on Mg(2+) as a cofactor.

The protein resides in the cytoplasm. The catalysed reaction is 1-(5-phospho-beta-D-ribosyl)-ATP + diphosphate = 5-phospho-alpha-D-ribose 1-diphosphate + ATP. Its pathway is amino-acid biosynthesis; L-histidine biosynthesis; L-histidine from 5-phospho-alpha-D-ribose 1-diphosphate: step 1/9. Its activity is regulated as follows. Feedback inhibited by histidine. Catalyzes the condensation of ATP and 5-phosphoribose 1-diphosphate to form N'-(5'-phosphoribosyl)-ATP (PR-ATP). Has a crucial role in the pathway because the rate of histidine biosynthesis seems to be controlled primarily by regulation of HisG enzymatic activity. This is ATP phosphoribosyltransferase from Vibrio campbellii (strain ATCC BAA-1116).